Here is a 452-residue protein sequence, read N- to C-terminus: Adenylosuccinate synthetase 2 (452 aa).

GTP is bound by residues 19-25 (GDEGKAR) and 47-49 (GHT). Asp20 (proton acceptor) is an active-site residue. Residues Asp20 and Gly47 each coordinate Mg(2+). Residues 20 to 23 (DEGK), 45 to 48 (NAGH), Thr131, Arg145, Gln223, Thr238, and Arg338 each bind IMP. Catalysis depends on His48, which acts as the Proton donor. 334–340 (TGTGRPR) provides a ligand contact to substrate. Residues Arg340, 366–368 (KCD), and 437–439 (GLG) contribute to the GTP site.

It belongs to the adenylosuccinate synthetase family. As to quaternary structure, homodimer. It depends on Mg(2+) as a cofactor.

Its subcellular location is the cytoplasm. The catalysed reaction is IMP + L-aspartate + GTP = N(6)-(1,2-dicarboxyethyl)-AMP + GDP + phosphate + 2 H(+). The protein operates within purine metabolism; AMP biosynthesis via de novo pathway; AMP from IMP: step 1/2. Functionally, plays an important role in the de novo pathway of purine nucleotide biosynthesis. Catalyzes the first committed step in the biosynthesis of AMP from IMP. The protein is Adenylosuccinate synthetase 2 of Cupriavidus pinatubonensis (strain JMP 134 / LMG 1197) (Cupriavidus necator (strain JMP 134)).